Here is a 378-residue protein sequence, read N- to C-terminus: Acid phosphatase-like protein XcAP-2 (378 aa).

The N-terminal stretch at 1–19 (MKTTILLLVVLTIVQLSKA) is a signal peptide. 3 cysteine pairs are disulfide-bonded: Cys147–Cys374, Cys168–Cys220, and Cys347–Cys351.

It belongs to the histidine acid phosphatase family.

It is found in the secreted. Its function is as follows. Probably modulates blood feeding of fleas on vertebrate species by binding and sequestering different mediators involved in the host response. Binds histamine. Binds leukotriene B4, leukotriene C4, leukotriene D4 and leukotriene E4. Does not bind serotonin, adrenaline, noradrenaline, ADP, and stable analogs of thromboxane A2: U-46619 and cTXA2. This Xenopsylla cheopis (Oriental rat flea) protein is Acid phosphatase-like protein XcAP-2.